Here is a 181-residue protein sequence, read N- to C-terminus: Inner membrane-spanning protein YciB (181 aa).

Helical transmembrane passes span 3-23 (LLFD…FGIY), 54-74 (SLAI…PWFI), 81-101 (IYWL…KPLI), 119-139 (LNLA…YVAY), and 149-169 (FKLF…AFYL).

It belongs to the YciB family.

The protein localises to the cell inner membrane. In terms of biological role, plays a role in cell envelope biogenesis, maintenance of cell envelope integrity and membrane homeostasis. This chain is Inner membrane-spanning protein YciB, found in Legionella pneumophila subsp. pneumophila (strain Philadelphia 1 / ATCC 33152 / DSM 7513).